Reading from the N-terminus, the 101-residue chain is Class II hydrophobin 5 (101 aa).

The N-terminal stretch at Met1 to Ala15 is a signal peptide. Intrachain disulfides connect Cys33–Cys83, Cys44–Cys74, Cys45–Cys57, and Cys84–Cys95.

The protein belongs to the cerato-ulmin hydrophobin family. In terms of assembly, homodimer. Homodimers further self-assemble to form highly ordered films at water-air interfaces through intermolecular interactions.

It localises to the secreted. The protein localises to the cell wall. Aerial growth, conidiation, and dispersal of filamentous fungi in the environment rely upon a capability of their secreting small amphipathic proteins called hydrophobins (HPBs) with low sequence identity. Class I can self-assemble into an outermost layer of rodlet bundles on aerial cell surfaces, conferring cellular hydrophobicity that supports fungal growth, development and dispersal; whereas Class II form highly ordered films at water-air interfaces through intermolecular interactions but contribute nothing to the rodlet structure. This chain is Class II hydrophobin 5, found in Trichoderma asperellum (strain ATCC 204424 / CBS 433.97 / NBRC 101777).